Reading from the N-terminus, the 158-residue chain is Cyclic pyranopterin monophosphate synthase (158 aa).

Substrate-binding positions include 74-76 (MCH) and 112-113 (ME). D127 is an active-site residue.

It belongs to the MoaC family. Homohexamer; trimer of dimers.

The catalysed reaction is (8S)-3',8-cyclo-7,8-dihydroguanosine 5'-triphosphate = cyclic pyranopterin phosphate + diphosphate. The protein operates within cofactor biosynthesis; molybdopterin biosynthesis. Its function is as follows. Catalyzes the conversion of (8S)-3',8-cyclo-7,8-dihydroguanosine 5'-triphosphate to cyclic pyranopterin monophosphate (cPMP). This is Cyclic pyranopterin monophosphate synthase from Thermoanaerobacter sp. (strain X514).